A 294-amino-acid chain; its full sequence is Cytidine deaminase (294 aa).

2 consecutive CMP/dCMP-type deaminase domains span residues 48-168 (DDNT…FGPN) and 187-294 (ETTD…YYTF). Substrate is bound at residue 89–91 (NME). His102 serves as a coordination point for Zn(2+). Glu104 functions as the Proton donor in the catalytic mechanism. Zn(2+)-binding residues include Cys129 and Cys132.

This sequence belongs to the cytidine and deoxycytidylate deaminase family. In terms of assembly, homodimer. It depends on Zn(2+) as a cofactor.

It carries out the reaction cytidine + H2O + H(+) = uridine + NH4(+). The enzyme catalyses 2'-deoxycytidine + H2O + H(+) = 2'-deoxyuridine + NH4(+). Its function is as follows. This enzyme scavenges exogenous and endogenous cytidine and 2'-deoxycytidine for UMP synthesis. This Photorhabdus laumondii subsp. laumondii (strain DSM 15139 / CIP 105565 / TT01) (Photorhabdus luminescens subsp. laumondii) protein is Cytidine deaminase.